The sequence spans 566 residues: Viral IRF3-like protein (566 aa).

Disordered regions lie at residues 151–170 (PRPF…PAFC) and 176–236 (QTGA…VHTD).

Belongs to the IRF family. Interacts with host SKP2. Interacts with host USP7.

Plays a role in the inhibition of host immune response. Interferes with the transactivating potential of cellular IRFs IRF3 and IRF7 that play a critical role in the induction of IFNA and IFNB genes. Additionally, interferes with surface major histocompatibility complex class II (MHC-II) antigen presentation. The polypeptide is Viral IRF3-like protein (vIRF-3) (Human herpesvirus 8 type P (isolate GK18) (HHV-8)).